Here is a 402-residue protein sequence, read N- to C-terminus: MLASSRQPRHAFVEHHHQLSSSTLHRSGSPQTGTLRQDATTPTLATSVGPSMDRSASDYSQSGLPSPYPSNCGDNQSEAQSVTVDTSSAAQYNASAQQEVRSNNPGNYSASATPTSEYGVYPASARSSSFPDHLQQRSYHPASNHSGSSGDPSIAAPSPTYGAPAQYSPYGPPSQDMSHGYAHPGSNLYAQPRPDWSGYGQQHGAPLTPGHHVFPQTPTSAPPQARPNQVYSFVPIPGAQQHKRPRRRYEEIERMYKCGWQGCEKAYGTLNHLNAHVTMQSHGQKRTPEEFKEIRKEWKARKKEEEAARKADEERQRQAAQSQGGSTEGQAGSDVSQSSNGYAGARGAVQLPPIGYQAGQYPAATSTSVQQQPLPDYNASYMQGYQPASPYGGSNQAMYNQR.

Residues methionine 1–arginine 247 form a disordered region. 2 stretches are compositionally biased toward polar residues: residues leucine 19–glycine 49 and cysteine 72–threonine 86. The span at serine 87–glutamine 98 shows a compositional bias: low complexity. Composition is skewed to polar residues over residues glutamate 99–serine 116 and alanine 125–aspartate 151. The segment at tyrosine 256–histidine 282 adopts a C2H2-type zinc-finger fold. Residues glutamate 289–glutamine 323 are a coiled coil. The span at lysine 302–arginine 317 shows a compositional bias: basic and acidic residues. The segment at lysine 302–arginine 402 is disordered. Composition is skewed to polar residues over residues serine 322–glycine 341, alanine 363–proline 373, and glycine 392–arginine 402.

It is found in the nucleus. In terms of biological role, transcription factor that plays a central role in appressorium formation and pathogenicity. Required for the expression of a large set of genes including factors that might play a role in membrane metabolism and ergosterol biosynthesis, the chitin-binding protein CBP1,as well as CHS7 that is essential for normal pathogenic development. The sequence is that of C2H2 finger domain transcription factor CON7 from Pyricularia oryzae (strain 70-15 / ATCC MYA-4617 / FGSC 8958) (Rice blast fungus).